A 175-amino-acid polypeptide reads, in one-letter code: Peptide deformylase (175 aa).

Fe cation contacts are provided by Cys98 and His140. Glu141 is a catalytic residue. A Fe cation-binding site is contributed by His144.

Belongs to the polypeptide deformylase family. The cofactor is Fe(2+).

The catalysed reaction is N-terminal N-formyl-L-methionyl-[peptide] + H2O = N-terminal L-methionyl-[peptide] + formate. In terms of biological role, removes the formyl group from the N-terminal Met of newly synthesized proteins. Requires at least a dipeptide for an efficient rate of reaction. N-terminal L-methionine is a prerequisite for activity but the enzyme has broad specificity at other positions. The polypeptide is Peptide deformylase (Bradyrhizobium sp. (strain BTAi1 / ATCC BAA-1182)).